Reading from the N-terminus, the 319-residue chain is Ferrochelatase (319 aa).

Histidine 194 and glutamate 275 together coordinate Fe cation.

Belongs to the ferrochelatase family.

The protein resides in the cytoplasm. The catalysed reaction is heme b + 2 H(+) = protoporphyrin IX + Fe(2+). Its pathway is porphyrin-containing compound metabolism; protoheme biosynthesis; protoheme from protoporphyrin-IX: step 1/1. Catalyzes the ferrous insertion into protoporphyrin IX. In Vibrio vulnificus (strain YJ016), this protein is Ferrochelatase.